The following is a 180-amino-acid chain: Large ribosomal subunit protein uL6 (180 aa).

Belongs to the universal ribosomal protein uL6 family. Part of the 50S ribosomal subunit.

In terms of biological role, this protein binds to the 23S rRNA, and is important in its secondary structure. It is located near the subunit interface in the base of the L7/L12 stalk, and near the tRNA binding site of the peptidyltransferase center. This is Large ribosomal subunit protein uL6 from Dictyoglomus turgidum (strain DSM 6724 / Z-1310).